The following is a 292-amino-acid chain: Elongation factor Ts (292 aa).

The segment at 80-83 is involved in Mg(2+) ion dislocation from EF-Tu; sequence TDFV.

It belongs to the EF-Ts family.

It localises to the cytoplasm. Associates with the EF-Tu.GDP complex and induces the exchange of GDP to GTP. It remains bound to the aminoacyl-tRNA.EF-Tu.GTP complex up to the GTP hydrolysis stage on the ribosome. The polypeptide is Elongation factor Ts (Oenococcus oeni (strain ATCC BAA-331 / PSU-1)).